A 179-amino-acid polypeptide reads, in one-letter code: SCAN domain-containing protein 1 (179 aa).

The disordered stretch occupies residues 1–108 (MAATEPILAA…GSRLGPETFR (108 aa)). A compositionally biased stretch (low complexity) spans 60-80 (AIPTPQAAASAAPELPLGPAP). The SCAN box domain maps to 108 to 166 (RQRFRQFRYQDAAGPREAFRQLRELSRQWLRPDIRTKEQIVEMLVQEQLLAILPEAARA).

Interacts with ZNF202.

It is found in the nucleus. May regulate transcriptional activity. In Pongo pygmaeus (Bornean orangutan), this protein is SCAN domain-containing protein 1 (SCAND1).